Reading from the N-terminus, the 636-residue chain is Rik1-associated factor 2 (636 aa).

Component of the Clr4 methyltransferase complex (ClrC) composed of at least clr4, rik1, pcu4, rbx1, raf1 and raf2. The cullin pcu4, rik1, raf1, raf2 and the ring-box protein rbx1 are components of an E3 ubiquitin ligase, whose activity is essential for heterochromatin assembly. Interacts with pcu4.

Its subcellular location is the cytoplasm. The protein resides in the mitochondrion. The protein localises to the nucleus. It localises to the chromosome. Component of the Clr4 methyltransferase complex (ClrC) which contributes to the establishment of heterochromatin by specifically methylating histone H3 to form H3K9me. ClrC preferentially ubiquitylates H3K14 and ClrC-mediated H3 ubiquitination promotes clr4 methyltransferase activity for the methylation of H3K9. H3K9me represents a specific tag for epigenetic transcriptional repression by recruiting swi6/HP1 to methylated histones which leads to transcriptional silencing within centromeric heterochromatin, telomeric regions and at the silent mating-type loci. Has a role in both mitotic and meiotic chromosome segregation. In Schizosaccharomyces pombe (strain 972 / ATCC 24843) (Fission yeast), this protein is Rik1-associated factor 2 (raf2).